Consider the following 626-residue polypeptide: Chaperone protein HtpG (626 aa).

Positions 1-331 are a; substrate-binding; the sequence is MSETVERHEF…TDDLPLNVSR (331 aa). Residues 332–544 are b; sequence EMLQSTPTLQ…GMGPDLQMQR (213 aa). Positions 545-626 are c; sequence LLRRAGRGFG…GTAAKPAGSA (82 aa).

This sequence belongs to the heat shock protein 90 family. In terms of assembly, homodimer.

The protein localises to the cytoplasm. Molecular chaperone. Has ATPase activity. The sequence is that of Chaperone protein HtpG from Methylorubrum extorquens (strain CM4 / NCIMB 13688) (Methylobacterium extorquens).